The following is a 411-amino-acid chain: S-inosyl-L-homocysteine hydrolase (411 aa).

Substrate is bound by residues Asp121 and Glu146. 147–149 (TTT) serves as a coordination point for NAD(+). Positions 176 and 180 each coordinate substrate. Residues Asn181, 210 to 215 (GYGWCG), Glu233, Asn268, 289 to 291 (SGH), and Asn335 each bind NAD(+).

The protein belongs to the adenosylhomocysteinase family. NAD(+) serves as cofactor.

The protein resides in the cytoplasm. The enzyme catalyses S-inosyl-L-homocysteine + H2O = L-homocysteine + inosine. It functions in the pathway amino-acid biosynthesis; S-adenosyl-L-methionine biosynthesis. Catalyzes the hydrolysis of S-inosyl-L-homocysteine (SIH) to L-homocysteine (Hcy) and inosine. Likely functions in a S-adenosyl-L-methionine (SAM) recycling pathway from S-adenosyl-L-homocysteine (SAH) produced from SAM-dependent methylation reactions. Can also catalyze the reverse reaction in vitro, i.e. the synthesis of SIH from Hcy and inosine. This is S-inosyl-L-homocysteine hydrolase from Methanosarcina acetivorans (strain ATCC 35395 / DSM 2834 / JCM 12185 / C2A).